A 68-amino-acid chain; its full sequence is Beta-defensin 1 (68 aa).

Residues 1–21 form the signal peptide; it reads MRTSYLLLFTLCLLLSEMASG. Residues 22 to 32 constitute a propeptide that is removed on maturation; it reads DNFLTGLGHRS. 3 disulfides stabilise this stretch: Cys37–Cys66, Cys44–Cys59, and Cys49–Cys67.

Belongs to the beta-defensin family. Monomer. Homodimer.

It is found in the secreted. Its subcellular location is the membrane. Has bactericidal activity. May act as a ligand for C-C chemokine receptor CCR6. Positively regulates the sperm motility and bactericidal activity in a CCR6-dependent manner. Binds to CCR6 and triggers Ca2+ mobilization in the sperm which is important for its motility. This is Beta-defensin 1 (DEFB1) from Hylobates moloch (Silvery gibbon).